Here is a 152-residue protein sequence, read N- to C-terminus: D-aminoacyl-tRNA deacylase (152 aa).

Residues 137 to 138 (GP) carry the Gly-cisPro motif, important for rejection of L-amino acids motif.

It belongs to the DTD family. In terms of assembly, homodimer.

It is found in the cytoplasm. It carries out the reaction glycyl-tRNA(Ala) + H2O = tRNA(Ala) + glycine + H(+). It catalyses the reaction a D-aminoacyl-tRNA + H2O = a tRNA + a D-alpha-amino acid + H(+). An aminoacyl-tRNA editing enzyme that deacylates mischarged D-aminoacyl-tRNAs. Also deacylates mischarged glycyl-tRNA(Ala), protecting cells against glycine mischarging by AlaRS. Acts via tRNA-based rather than protein-based catalysis; rejects L-amino acids rather than detecting D-amino acids in the active site. By recycling D-aminoacyl-tRNA to D-amino acids and free tRNA molecules, this enzyme counteracts the toxicity associated with the formation of D-aminoacyl-tRNA entities in vivo and helps enforce protein L-homochirality. The polypeptide is D-aminoacyl-tRNA deacylase (Aromatoleum aromaticum (strain DSM 19018 / LMG 30748 / EbN1) (Azoarcus sp. (strain EbN1))).